The following is a 210-amino-acid chain: Thiamine-phosphate synthase (210 aa).

4-amino-2-methyl-5-(diphosphooxymethyl)pyrimidine is bound by residues 39 to 43 (QLREK) and asparagine 71. Residues aspartate 72 and aspartate 91 each coordinate Mg(2+). Residue serine 110 participates in 4-amino-2-methyl-5-(diphosphooxymethyl)pyrimidine binding. 136–138 (TST) contacts 2-[(2R,5Z)-2-carboxy-4-methylthiazol-5(2H)-ylidene]ethyl phosphate. Lysine 139 provides a ligand contact to 4-amino-2-methyl-5-(diphosphooxymethyl)pyrimidine. Residues glycine 166 and 186–187 (VS) contribute to the 2-[(2R,5Z)-2-carboxy-4-methylthiazol-5(2H)-ylidene]ethyl phosphate site.

The protein belongs to the thiamine-phosphate synthase family. Mg(2+) serves as cofactor.

It catalyses the reaction 2-[(2R,5Z)-2-carboxy-4-methylthiazol-5(2H)-ylidene]ethyl phosphate + 4-amino-2-methyl-5-(diphosphooxymethyl)pyrimidine + 2 H(+) = thiamine phosphate + CO2 + diphosphate. The catalysed reaction is 2-(2-carboxy-4-methylthiazol-5-yl)ethyl phosphate + 4-amino-2-methyl-5-(diphosphooxymethyl)pyrimidine + 2 H(+) = thiamine phosphate + CO2 + diphosphate. It carries out the reaction 4-methyl-5-(2-phosphooxyethyl)-thiazole + 4-amino-2-methyl-5-(diphosphooxymethyl)pyrimidine + H(+) = thiamine phosphate + diphosphate. Its pathway is cofactor biosynthesis; thiamine diphosphate biosynthesis; thiamine phosphate from 4-amino-2-methyl-5-diphosphomethylpyrimidine and 4-methyl-5-(2-phosphoethyl)-thiazole: step 1/1. Functionally, condenses 4-methyl-5-(beta-hydroxyethyl)thiazole monophosphate (THZ-P) and 2-methyl-4-amino-5-hydroxymethyl pyrimidine pyrophosphate (HMP-PP) to form thiamine monophosphate (TMP). This chain is Thiamine-phosphate synthase, found in Ruminiclostridium cellulolyticum (strain ATCC 35319 / DSM 5812 / JCM 6584 / H10) (Clostridium cellulolyticum).